The sequence spans 204 residues: ATP phosphoribosyltransferase (204 aa).

Belongs to the ATP phosphoribosyltransferase family. Short subfamily. As to quaternary structure, heteromultimer composed of HisG and HisZ subunits.

Its subcellular location is the cytoplasm. It carries out the reaction 1-(5-phospho-beta-D-ribosyl)-ATP + diphosphate = 5-phospho-alpha-D-ribose 1-diphosphate + ATP. It participates in amino-acid biosynthesis; L-histidine biosynthesis; L-histidine from 5-phospho-alpha-D-ribose 1-diphosphate: step 1/9. Its function is as follows. Catalyzes the condensation of ATP and 5-phosphoribose 1-diphosphate to form N'-(5'-phosphoribosyl)-ATP (PR-ATP). Has a crucial role in the pathway because the rate of histidine biosynthesis seems to be controlled primarily by regulation of HisG enzymatic activity. The sequence is that of ATP phosphoribosyltransferase from Staphylococcus epidermidis (strain ATCC 35984 / DSM 28319 / BCRC 17069 / CCUG 31568 / BM 3577 / RP62A).